A 263-amino-acid chain; its full sequence is Phosphatidylglycerol--prolipoprotein diacylglyceryl transferase (263 aa).

Helical transmembrane passes span 6 to 26, 50 to 70, 85 to 105, and 112 to 132; these read VIFS…VLGI, LLTA…VLIY, TWEG…AVII, and IPIF…LFLG. Arg133 is a binding site for a 1,2-diacyl-sn-glycero-3-phospho-(1'-sn-glycerol). The next 3 helical transmembrane spans lie at 169–189, 197–217, and 233–253; these read LYEA…LFFL, GALT…VEFF, and MGQL…LGAL.

It belongs to the Lgt family.

The protein localises to the cell membrane. The enzyme catalyses L-cysteinyl-[prolipoprotein] + a 1,2-diacyl-sn-glycero-3-phospho-(1'-sn-glycerol) = an S-1,2-diacyl-sn-glyceryl-L-cysteinyl-[prolipoprotein] + sn-glycerol 1-phosphate + H(+). Its pathway is protein modification; lipoprotein biosynthesis (diacylglyceryl transfer). Catalyzes the transfer of the diacylglyceryl group from phosphatidylglycerol to the sulfhydryl group of the N-terminal cysteine of a prolipoprotein, the first step in the formation of mature lipoproteins. This is Phosphatidylglycerol--prolipoprotein diacylglyceryl transferase from Wolbachia sp. subsp. Drosophila simulans (strain wRi).